We begin with the raw amino-acid sequence, 407 residues long: Arrestin domain-containing protein 2 (407 aa).

Belongs to the arrestin family. Interacts with WWP1 (via WW domains).

The protein is Arrestin domain-containing protein 2 (Arrdc2) of Mus musculus (Mouse).